Reading from the N-terminus, the 58-residue chain is MLGWALTFLVVAIIAGVLGFGGIASGAASIAKIIFFIFLALLVISLVVNALKGRGPKV.

2 consecutive transmembrane segments (helical) span residues 4-24 (WALTFLVVAIIAGVLGFGGIA) and 28-48 (ASIAKIIFFIFLALLVISLVV).

The protein belongs to the UPF0391 family.

The protein localises to the cell membrane. The chain is UPF0391 membrane protein ABO_0024 from Alcanivorax borkumensis (strain ATCC 700651 / DSM 11573 / NCIMB 13689 / SK2).